A 198-amino-acid chain; its full sequence is Recombination protein RecR (198 aa).

Residues 57-72 (CSECGHITEQDPCYIC) form a C4-type zinc finger. Positions 80 to 175 (SVICVVEDDK…TVTRLAQGLS (96 aa)) constitute a Toprim domain.

Belongs to the RecR family.

Functionally, may play a role in DNA repair. It seems to be involved in an RecBC-independent recombinational process of DNA repair. It may act with RecF and RecO. The sequence is that of Recombination protein RecR from Staphylococcus saprophyticus subsp. saprophyticus (strain ATCC 15305 / DSM 20229 / NCIMB 8711 / NCTC 7292 / S-41).